Consider the following 780-residue polypeptide: LPS-assembly protein LptD (780 aa).

Residues 1–24 (MKKRFPTLLATLIWTALYSQHTLA) form the signal peptide.

Belongs to the LptD family. As to quaternary structure, component of the lipopolysaccharide transport and assembly complex. Interacts with LptE and LptA.

It is found in the cell outer membrane. Together with LptE, is involved in the assembly of lipopolysaccharide (LPS) at the surface of the outer membrane. The sequence is that of LPS-assembly protein LptD from Yersinia pseudotuberculosis serotype I (strain IP32953).